The sequence spans 383 residues: Cytochrome b (383 aa).

A run of 4 helical transmembrane segments spans residues 34–54, 78–99, 114–134, and 179–199; these read FGSL…FLMM, WLIR…FLHI, WNVG…GYVL, and FTAL…THLI. Residues H84 and H98 each contribute to the heme b site. Heme b-binding residues include H183 and H197. Position 202 (H202) interacts with a ubiquinone. 4 consecutive transmembrane segments (helical) span residues 227–247, 289–309, 321–341, and 348–368; these read MKDV…ALYL, LGGV…PFLH, LSQL…WIGG, and YILL…ILMP.

Belongs to the cytochrome b family. In terms of assembly, the cytochrome bc1 complex contains 3 respiratory subunits (MT-CYB, CYC1 and UQCRFS1), 2 core proteins (UQCRC1 and UQCRC2) and probably 6 low-molecular weight proteins. Heme b is required as a cofactor.

The protein resides in the mitochondrion inner membrane. In terms of biological role, component of the ubiquinol-cytochrome c reductase complex (complex III or cytochrome b-c1 complex) that is part of the mitochondrial respiratory chain. The b-c1 complex mediates electron transfer from ubiquinol to cytochrome c. Contributes to the generation of a proton gradient across the mitochondrial membrane that is then used for ATP synthesis. The protein is Cytochrome b (MT-CYB) of Caiman crocodilus (Spectacled caiman).